A 100-amino-acid chain; its full sequence is MNLTPREKDKLLIAMAAMVARRRLERGVKLNHPEAIALVSDFVVEGARDGRTVAELMEAGAHVITREQVMDGVAEMIRDIQVEATFPDGTKLVTVHEPIR.

The protein belongs to the urease gamma subunit family. Heterotrimer of UreA (gamma), UreB (beta) and UreC (alpha) subunits. Three heterotrimers associate to form the active enzyme.

It localises to the cytoplasm. The catalysed reaction is urea + 2 H2O + H(+) = hydrogencarbonate + 2 NH4(+). The protein operates within nitrogen metabolism; urea degradation; CO(2) and NH(3) from urea (urease route): step 1/1. Its function is as follows. Disruption of the ure1 gene cluster suggests that it protects brucellae during their passage through the stomach. The major route of infection in human brucellosis is oral. The chain is Urease subunit gamma 1 from Brucella abortus (strain 2308).